We begin with the raw amino-acid sequence, 300 residues long: MSYRELVAELPREHAEALSDALVELGALSVSVEDADADTPDEQPLFGEPGLVPERTAWQHSRVIALVDATQDPAVLLAAAANEAGLAQAPRFELREVEEQDWVRLTQSQFEPIHIGEKIWVVPSWHDAPQPDALVLELDPGLAFGTGSHPTTRLCMEWLEQTVQPGQTVLDYGCGSGILAILAKKCGAGRVTGIDIDPQAVEAARHNSERNRADVTYGLPDDCPDGEFDIVVANILSNPLKLMASMLASKVKPGGRIALSGVLARQADEVASVYARYIDIAVWREHEGWVCLAGTRRESH.

S-adenosyl-L-methionine-binding residues include T152, G173, D195, and N234.

This sequence belongs to the methyltransferase superfamily. PrmA family.

It localises to the cytoplasm. It catalyses the reaction L-lysyl-[protein] + 3 S-adenosyl-L-methionine = N(6),N(6),N(6)-trimethyl-L-lysyl-[protein] + 3 S-adenosyl-L-homocysteine + 3 H(+). Methylates ribosomal protein L11. The sequence is that of Ribosomal protein L11 methyltransferase from Burkholderia pseudomallei (strain 1710b).